The primary structure comprises 198 residues: Elongation factor Ts (198 aa).

The involved in Mg(2+) ion dislocation from EF-Tu stretch occupies residues 82–85; it reads TDFV.

Belongs to the EF-Ts family.

It is found in the cytoplasm. Functionally, associates with the EF-Tu.GDP complex and induces the exchange of GDP to GTP. It remains bound to the aminoacyl-tRNA.EF-Tu.GTP complex up to the GTP hydrolysis stage on the ribosome. This chain is Elongation factor Ts, found in Oleidesulfovibrio alaskensis (strain ATCC BAA-1058 / DSM 17464 / G20) (Desulfovibrio alaskensis).